We begin with the raw amino-acid sequence, 340 residues long: Ketol-acid reductoisomerase (NADP(+)) (340 aa).

In terms of domain architecture, KARI N-terminal Rossmann spans 3-182 (VTMYYEEDVE…GCARVGIIET (180 aa)). NADP(+) is bound by residues 26 to 29 (YGSQ), arginine 49, serine 53, and 83 to 86 (DELQ). Histidine 108 is an active-site residue. Glycine 134 serves as a coordination point for NADP(+). In terms of domain architecture, KARI C-terminal knotted spans 183–328 (TFKEETEEDL…AELRKAMPFT (146 aa)). Mg(2+) contacts are provided by aspartate 191, glutamate 195, glutamate 227, and glutamate 231. Serine 252 lines the substrate pocket.

Belongs to the ketol-acid reductoisomerase family. The cofactor is Mg(2+).

It carries out the reaction (2R)-2,3-dihydroxy-3-methylbutanoate + NADP(+) = (2S)-2-acetolactate + NADPH + H(+). It catalyses the reaction (2R,3R)-2,3-dihydroxy-3-methylpentanoate + NADP(+) = (S)-2-ethyl-2-hydroxy-3-oxobutanoate + NADPH + H(+). The protein operates within amino-acid biosynthesis; L-isoleucine biosynthesis; L-isoleucine from 2-oxobutanoate: step 2/4. It functions in the pathway amino-acid biosynthesis; L-valine biosynthesis; L-valine from pyruvate: step 2/4. In terms of biological role, involved in the biosynthesis of branched-chain amino acids (BCAA). Catalyzes an alkyl-migration followed by a ketol-acid reduction of (S)-2-acetolactate (S2AL) to yield (R)-2,3-dihydroxy-isovalerate. In the isomerase reaction, S2AL is rearranged via a Mg-dependent methyl migration to produce 3-hydroxy-3-methyl-2-ketobutyrate (HMKB). In the reductase reaction, this 2-ketoacid undergoes a metal-dependent reduction by NADPH to yield (R)-2,3-dihydroxy-isovalerate. The protein is Ketol-acid reductoisomerase (NADP(+)) of Lactococcus lactis subsp. cremoris (strain MG1363).